Reading from the N-terminus, the 474-residue chain is Glycogen synthase (474 aa).

An ADP-alpha-D-glucose-binding site is contributed by lysine 12.

Belongs to the glycosyltransferase 1 family. Bacterial/plant glycogen synthase subfamily.

It carries out the reaction [(1-&gt;4)-alpha-D-glucosyl](n) + ADP-alpha-D-glucose = [(1-&gt;4)-alpha-D-glucosyl](n+1) + ADP + H(+). It functions in the pathway glycan biosynthesis; glycogen biosynthesis. Its function is as follows. Synthesizes alpha-1,4-glucan chains using ADP-glucose. In Xanthomonas campestris pv. campestris (strain 8004), this protein is Glycogen synthase.